The sequence spans 440 residues: Trigger factor (440 aa).

The region spanning 163–248 (GDGVTVDFEG…VKKIESAHLP (86 aa)) is the PPIase FKBP-type domain.

The protein belongs to the FKBP-type PPIase family. Tig subfamily.

The protein localises to the cytoplasm. It catalyses the reaction [protein]-peptidylproline (omega=180) = [protein]-peptidylproline (omega=0). In terms of biological role, involved in protein export. Acts as a chaperone by maintaining the newly synthesized protein in an open conformation. Functions as a peptidyl-prolyl cis-trans isomerase. The chain is Trigger factor from Verminephrobacter eiseniae (strain EF01-2).